Reading from the N-terminus, the 396-residue chain is Elongation factor Tu (396 aa).

Residues 10–206 form the tr-type G domain; the sequence is KPHVNIGTIG…AVDSYIPEPV (197 aa). Positions 19-26 are G1; it reads GHVDHGKT. A GTP-binding site is contributed by 19–26; the sequence is GHVDHGKT. Position 26 (Thr26) interacts with Mg(2+). Residues 60–64 are G2; that stretch reads GITIA. The G3 stretch occupies residues 81–84; the sequence is DCPG. GTP contacts are provided by residues 81–85 and 136–139; these read DCPGH and NKAD. Positions 136 to 139 are G4; the sequence is NKAD. Residues 174 to 176 are G5; that stretch reads SAL.

The protein belongs to the TRAFAC class translation factor GTPase superfamily. Classic translation factor GTPase family. EF-Tu/EF-1A subfamily. As to quaternary structure, monomer.

Its subcellular location is the cytoplasm. The catalysed reaction is GTP + H2O = GDP + phosphate + H(+). Functionally, GTP hydrolase that promotes the GTP-dependent binding of aminoacyl-tRNA to the A-site of ribosomes during protein biosynthesis. This is Elongation factor Tu from Geotalea uraniireducens (strain Rf4) (Geobacter uraniireducens).